A 332-amino-acid polypeptide reads, in one-letter code: UPF0194 membrane protein YbhG (332 aa).

The signal sequence occupies residues 1–16 (MMKKPVVIGLAVVVLA). Residues 108-209 (EEIAQAAAAV…LNLQDSTLIA (102 aa)) are a coiled coil.

The protein belongs to the UPF0194 family.

The protein localises to the periplasm. This Shigella boydii serotype 4 (strain Sb227) protein is UPF0194 membrane protein YbhG.